The primary structure comprises 37 residues: Cytochrome b6-f complex subunit 5 (37 aa).

Residues leucine 5–alanine 25 form a helical membrane-spanning segment.

This sequence belongs to the PetG family. As to quaternary structure, the 4 large subunits of the cytochrome b6-f complex are cytochrome b6, subunit IV (17 kDa polypeptide, PetD), cytochrome f and the Rieske protein, while the 4 small subunits are PetG, PetL, PetM and PetN. The complex functions as a dimer.

Its subcellular location is the plastid. The protein localises to the chloroplast thylakoid membrane. Component of the cytochrome b6-f complex, which mediates electron transfer between photosystem II (PSII) and photosystem I (PSI), cyclic electron flow around PSI, and state transitions. PetG is required for either the stability or assembly of the cytochrome b6-f complex. The sequence is that of Cytochrome b6-f complex subunit 5 from Phaeodactylum tricornutum (strain CCAP 1055/1).